We begin with the raw amino-acid sequence, 259 residues long: Pre-mRNA-splicing factor CWC24 (259 aa).

The interval 1–67 (MFRKRLVNKS…HENEGKLQKK (67 aa)) is disordered. Basic and acidic residues predominate over residues 25–39 (FSEEKLVASDEEKGS). At Ser33 the chain carries Phosphoserine. Positions 47–57 (KSGNSRTLQLS) are enriched in polar residues. Residues 58 to 67 (HENEGKLQKK) are compositionally biased toward basic and acidic residues. Phosphoserine is present on Ser105. The C3H1-type zinc finger occupies 138 to 166 (DFQPDVCKDYKQTGYCGYGDSCKFLHSRD). The RING-type zinc finger occupies 199–237 (CTLCKEDYKSPVVTNCGHYFCGSCFAKDMKKGTKCFICH).

Belongs to the CWC24 family. In terms of assembly, belongs to the CWC complex (or CEF1-associated complex), a spliceosome sub-complex reminiscent of a late-stage spliceosome composed of the U2, U5 and U6 snRNAs and at least BUD13, BUD31, BRR2, CDC40, CEF1, CLF1, CUS1, CWC2, CWC15, CWC21, CWC22, CWC23, CWC24, CWC25, CWC27, ECM2, HSH155, IST3, ISY1, LEA1, MSL1, NTC20, PRP8, PRP9, PRP11, PRP19, PRP21, PRP22, PRP45, PRP46, SLU7, SMB1, SMD1, SMD2, SMD3, SMX2, SMX3, SNT309, SNU114, SPP2, SYF1, SYF2, RSE1 and YJU2.

The protein resides in the nucleus. Involved in pre-mRNA splicing. This is Pre-mRNA-splicing factor CWC24 (CWC24) from Saccharomyces cerevisiae (strain ATCC 204508 / S288c) (Baker's yeast).